A 518-amino-acid polypeptide reads, in one-letter code: Glucan 1,4-alpha-maltohexaosidase (518 aa).

The signal sequence occupies residues 1 to 33 (MKMRTGKKGFLSILLAFLLVITSIPFTLVDVEA). Asn139, Asp196, Ala219, Asp221, Asp232, Asp238, Asp240, and Asp242 together coordinate Ca(2+). Asp196 serves as a coordination point for Na(+). Na(+) contacts are provided by Asp221, Asp232, and Asp238. Asp269 acts as the Nucleophile in catalysis. Ca(2+) is bound at residue His273. Glu299 (proton donor) is an active-site residue.

It belongs to the glycosyl hydrolase 13 family. It depends on Ca(2+) as a cofactor. Requires Na(+) as cofactor.

It localises to the secreted. The catalysed reaction is Hydrolysis of (1-&gt;4)-alpha-D-glucosidic linkages in amylaceous polysaccharides, to remove successive maltohexaose residues from the non-reducing chain ends.. It functions in the pathway glycan degradation; starch degradation. This Bacillus sp. (strain 707) protein is Glucan 1,4-alpha-maltohexaosidase.